Consider the following 262-residue polypeptide: 3-methyl-2-oxobutanoate hydroxymethyltransferase (262 aa).

Residues Asp-44 and Asp-83 each contribute to the Mg(2+) site. Residues 44 to 45 (DS), Asp-83, and Lys-111 each bind 3-methyl-2-oxobutanoate. Glu-113 contributes to the Mg(2+) binding site. The active-site Proton acceptor is Glu-180.

This sequence belongs to the PanB family. In terms of assembly, homodecamer; pentamer of dimers. Mg(2+) is required as a cofactor.

The protein resides in the cytoplasm. It carries out the reaction 3-methyl-2-oxobutanoate + (6R)-5,10-methylene-5,6,7,8-tetrahydrofolate + H2O = 2-dehydropantoate + (6S)-5,6,7,8-tetrahydrofolate. It functions in the pathway cofactor biosynthesis; (R)-pantothenate biosynthesis; (R)-pantoate from 3-methyl-2-oxobutanoate: step 1/2. Its function is as follows. Catalyzes the reversible reaction in which hydroxymethyl group from 5,10-methylenetetrahydrofolate is transferred onto alpha-ketoisovalerate to form ketopantoate. In Alcanivorax borkumensis (strain ATCC 700651 / DSM 11573 / NCIMB 13689 / SK2), this protein is 3-methyl-2-oxobutanoate hydroxymethyltransferase.